A 692-amino-acid polypeptide reads, in one-letter code: Mitogen-activated protein kinase kinase kinase 7-interacting protein 3 homolog (692 aa).

Positions 8 to 51 (LDIQVLNDLQQRFPEIPRDVVSQCMLQNNSNLDACYRALTQESC) constitute a CUE domain. Disordered stretches follow at residues 138-159 (NDQN…GVGT), 206-333 (YGTP…PYGP), and 349-427 (SQQR…VVMS). Polar residues-rich tracts occupy residues 215–230 (PSQN…NTAW), 249–298 (QSFQ…QTSH), and 349–387 (SQQR…SGSP). A compositionally biased stretch (low complexity) spans 409–422 (SQPPTTTGSPTPSS). Positions 496-580 (ALLLHQRARM…QKEIDLLQSR (85 aa)) form a coiled coil. The interval 598-662 (SPGPAVPPNT…SPRPGRDEDF (65 aa)) is disordered. A compositionally biased stretch (basic and acidic residues) spans 608–620 (CKKESSETTSGER). Residues 662–692 (FEGSPWNCNSCTFLNHPALNRCEQCEMPRFT) form a RanBP2-type zinc finger.

In terms of biological role, may play a role in signaling pathway. This is Mitogen-activated protein kinase kinase kinase 7-interacting protein 3 homolog (map3k7ip3) from Xenopus laevis (African clawed frog).